The sequence spans 82 residues: Delta-conotoxin SVIE (82 aa).

The N-terminal stretch at 1 to 22 is a signal peptide; it reads MKLTCVMIVAVLFLTTWTFVTA. The propeptide occupies 23 to 51; sequence DDSRYGLKNLFPKARHEMKNPEASKLNKR. Disulfide bonds link Cys54/Cys69, Cys61/Cys73, and Cys68/Cys77. Pro65 is subject to 4-hydroxyproline.

It belongs to the conotoxin O1 superfamily. Expressed by the venom duct.

It is found in the secreted. In terms of biological role, delta-conotoxins bind to site 6 of voltage-gated sodium channels (Nav) and inhibit the inactivation process. Impairs rapid channel inactivation of Nav1.4/SCN4A (Kd=500 nM). Interacts with a conserved hydrophobic triad (YFV) in the domain-4 voltage sensor of sodium channels. In vivo, injection of both native or synthetic peptide induces twitching of back limbs, running in circles, and spastic paralysis. The sequence is that of Delta-conotoxin SVIE (SO6) from Conus striatus (Striated cone).